We begin with the raw amino-acid sequence, 70 residues long: Delta-hexatoxin-Mg1b (70 aa).

A signal peptide spans 1-26 (MKILEKALLENDSAAEEESRNLRTKR). Cystine bridges form between Cys27/Cys41, Cys34/Cys46, Cys40/Cys57, and Cys42/Cys68.

Expressed by the venom gland.

The protein resides in the secreted. Inhibits tetrodotoxin-sensitive sodium channels (Nav). Intracranial injection into mice causes strong convulsions and death. Intrathorax injection into crickets causes paralysis prolonged for 2 minutes, followed by recovery. The polypeptide is Delta-hexatoxin-Mg1b (Macrothele gigas (Japanese funnel web spider)).